The chain runs to 334 residues: S-adenosylmethionine decarboxylase proenzyme 2 (334 aa).

Residue F7 participates in substrate binding. Residues E8 and E11 contribute to the active site. Position 67 (E67) interacts with substrate. The Schiff-base intermediate with substrate; via pyruvic acid role is filled by S68. S68 is subject to Pyruvic acid (Ser); by autocatalysis. Catalysis depends on C82, which acts as the Proton donor; for catalytic activity. Residue F223 participates in substrate binding. Active-site proton acceptor; for processing activity residues include S229 and H243. E247 contacts substrate. Phosphoserine is present on S298.

The protein belongs to the eukaryotic AdoMetDC family. Heterotetramer of two alpha and two beta chains. Requires pyruvate as cofactor. Is synthesized initially as an inactive proenzyme. Formation of the active enzyme involves a self-maturation process in which the active site pyruvoyl group is generated from an internal serine residue via an autocatalytic post-translational modification. Two non-identical subunits are generated from the proenzyme in this reaction, and the pyruvate is formed at the N-terminus of the alpha chain, which is derived from the carboxyl end of the proenzyme. The post-translation cleavage follows an unusual pathway, termed non-hydrolytic serinolysis, in which the side chain hydroxyl group of the serine supplies its oxygen atom to form the C-terminus of the beta chain, while the remainder of the serine residue undergoes an oxidative deamination to produce ammonia and the pyruvoyl group blocking the N-terminus of the alpha chain.

The catalysed reaction is S-adenosyl-L-methionine + H(+) = S-adenosyl 3-(methylsulfanyl)propylamine + CO2. The protein operates within amine and polyamine biosynthesis; S-adenosylmethioninamine biosynthesis; S-adenosylmethioninamine from S-adenosyl-L-methionine: step 1/1. Functionally, essential for biosynthesis of the polyamines spermidine and spermine. Promotes maintenance and self-renewal of embryonic stem cells, by maintaining spermine levels. The chain is S-adenosylmethionine decarboxylase proenzyme 2 (Amd2) from Mus spretus (Western Mediterranean mouse).